Reading from the N-terminus, the 727-residue chain is Kinesin-like protein KIN-14G (727 aa).

Disordered regions lie at residues 100–156, 172–194, and 336–357; these read QTAP…LHLR, HLSAPSRSPTPPPNAVAPSSCSR, and LAGGARSGRRDNPRRQGTGATR. Residues 114–133 show a composition bias toward polar residues; it reads VASSTAGRASRTKSASSTGR. In terms of domain architecture, Kinesin motor spans 381–710; sequence NIRVFCRVRP…LRFAARVNSC (330 aa). 461-468 contributes to the ATP binding site; that stretch reads GQTGSGKT.

The protein belongs to the TRAFAC class myosin-kinesin ATPase superfamily. Kinesin family. KIN-14 subfamily.

This Oryza sativa subsp. japonica (Rice) protein is Kinesin-like protein KIN-14G.